A 181-amino-acid polypeptide reads, in one-letter code: MAIDKSKRFLRKTGRKTLVSQNPYHALLVKLYRFLARRTNSKFNKVVLKRLLQTKTNRPPVSISRIANLMKDRKSGKIAVCVGTVVDDERLLDCPKLTVCALRFTETARSRIVKAGGKALSFDQFALVRPRGNNTFLIKGVTKAREVYKHFGRAPGLPGSHARPYVRSEGIKFQRSKTRNP.

It belongs to the eukaryotic ribosomal protein eL18 family.

It localises to the cytoplasm. This is Large ribosomal subunit protein eL18 (rpl18) from Dictyostelium discoideum (Social amoeba).